We begin with the raw amino-acid sequence, 211 residues long: Ubiquitin-conjugating enzyme E2 S-B (211 aa).

Residues 11 to 157 (HIIRRVYKEV…ARLMTDIHAQ (147 aa)) form the UBC core domain. Cysteine 95 functions as the Glycyl thioester intermediate in the catalytic mechanism. The interval 158–211 (GTSLRGKDPTDPCSSASTPVVSGDGPMAKKHAGDRDKKLAAKKKTDKKRALRRL) is disordered. Residues 197 to 211 (AAKKKTDKKRALRRL) are compositionally biased toward basic residues.

It belongs to the ubiquitin-conjugating enzyme family.

It catalyses the reaction S-ubiquitinyl-[E1 ubiquitin-activating enzyme]-L-cysteine + [E2 ubiquitin-conjugating enzyme]-L-cysteine = [E1 ubiquitin-activating enzyme]-L-cysteine + S-ubiquitinyl-[E2 ubiquitin-conjugating enzyme]-L-cysteine.. It participates in protein modification; protein ubiquitination. Its function is as follows. Catalyzes the covalent attachment of ubiquitin to other proteins. Acts as an essential factor of the anaphase promoting complex/cyclosome (APC/C), a cell cycle-regulated ubiquitin ligase that controls progression through mitosis. Acts by specifically elongating 'Lys-11'-linked polyubiquitin chains initiated by the E2 enzyme ube2c/ubch10 on APC/C substrates, enhancing the degradation of APC/C substrates by the proteasome and promoting mitotic exit. The chain is Ubiquitin-conjugating enzyme E2 S-B (ube2s-b) from Xenopus laevis (African clawed frog).